The chain runs to 317 residues: MTASSLRIASRRSQLAMVQTEWVRDELANAHPGLEISIEAMATQGDKILDVALAKIGDKGLFTKELEAQMLVNRADIAVHSLKDLPTNLPEGLMLGCITEREDPADALVMHAKNKDLTLATLPEGAVVGTSSLRRLAQLRYHYPHLTFKDVRGNVITRLEKLDSGQFDCLILAAAGLGRLGLGDRIHELIDPSISLHAVGQGALGIECRDGDAAVLEQIKVLEHRPTSLRCLAERAFLRTLEGGCQVPIGVNTRFEGDELVLTGMVASLDGKQLIRDELRAPQDQAEDLGNRLAELLRSQGAGEILAKIFAEARPEA.

Residue Cys245 is modified to S-(dipyrrolylmethanemethyl)cysteine.

It belongs to the HMBS family. Monomer. It depends on dipyrromethane as a cofactor.

It carries out the reaction 4 porphobilinogen + H2O = hydroxymethylbilane + 4 NH4(+). It participates in porphyrin-containing compound metabolism; protoporphyrin-IX biosynthesis; coproporphyrinogen-III from 5-aminolevulinate: step 2/4. The protein operates within porphyrin-containing compound metabolism; chlorophyll biosynthesis. Tetrapolymerization of the monopyrrole PBG into the hydroxymethylbilane pre-uroporphyrinogen in several discrete steps. This Synechococcus sp. (strain RCC307) protein is Porphobilinogen deaminase.